The following is a 257-amino-acid chain: 3-deoxy-manno-octulosonate cytidylyltransferase (257 aa).

This sequence belongs to the KdsB family.

It is found in the cytoplasm. It catalyses the reaction 3-deoxy-alpha-D-manno-oct-2-ulosonate + CTP = CMP-3-deoxy-beta-D-manno-octulosonate + diphosphate. Its pathway is nucleotide-sugar biosynthesis; CMP-3-deoxy-D-manno-octulosonate biosynthesis; CMP-3-deoxy-D-manno-octulosonate from 3-deoxy-D-manno-octulosonate and CTP: step 1/1. It functions in the pathway bacterial outer membrane biogenesis; lipopolysaccharide biosynthesis. Activates KDO (a required 8-carbon sugar) for incorporation into bacterial lipopolysaccharide in Gram-negative bacteria. This is 3-deoxy-manno-octulosonate cytidylyltransferase from Xylella fastidiosa (strain M23).